The sequence spans 368 residues: 3-dehydroquinate synthase (368 aa).

NAD(+) contacts are provided by residues 71–76 (DGESFK), 105–109 (GVIGD), 129–130 (TT), lysine 142, lysine 151, and 169–172 (TLRT). Residues glutamate 184, histidine 247, and histidine 264 each coordinate Zn(2+).

It belongs to the sugar phosphate cyclases superfamily. Dehydroquinate synthase family. Requires Co(2+) as cofactor. Zn(2+) serves as cofactor. The cofactor is NAD(+).

Its subcellular location is the cytoplasm. The enzyme catalyses 7-phospho-2-dehydro-3-deoxy-D-arabino-heptonate = 3-dehydroquinate + phosphate. It participates in metabolic intermediate biosynthesis; chorismate biosynthesis; chorismate from D-erythrose 4-phosphate and phosphoenolpyruvate: step 2/7. Functionally, catalyzes the conversion of 3-deoxy-D-arabino-heptulosonate 7-phosphate (DAHP) to dehydroquinate (DHQ). This chain is 3-dehydroquinate synthase, found in Ralstonia pickettii (strain 12J).